A 397-amino-acid chain; its full sequence is Phosphoribulokinase, chloroplastic (397 aa).

Residues 1 to 44 (MAVSAYTVPTTSHLGFNQKKQLFFCNKSAYKRVSFSSRPCVITC) constitute a chloroplast transit peptide. Residues Cys-62 and Cys-101 are joined by a disulfide bond.

It belongs to the phosphoribulokinase family.

Its subcellular location is the plastid. It is found in the chloroplast. The enzyme catalyses D-ribulose 5-phosphate + ATP = D-ribulose 1,5-bisphosphate + ADP + H(+). It participates in carbohydrate biosynthesis; Calvin cycle. Its activity is regulated as follows. Light regulated via thioredoxin by reversible oxidation/reduction of sulfhydryl/disulfide groups. The protein is Phosphoribulokinase, chloroplastic of Mesembryanthemum crystallinum (Common ice plant).